The sequence spans 54 residues: UPF0391 membrane protein Bpet1858 (54 aa).

2 consecutive transmembrane segments (helical) span residues 5 to 25 (AVVF…GIAA) and 27 to 47 (AAGI…LSIL).

This sequence belongs to the UPF0391 family.

It localises to the cell membrane. The chain is UPF0391 membrane protein Bpet1858 from Bordetella petrii (strain ATCC BAA-461 / DSM 12804 / CCUG 43448).